Reading from the N-terminus, the 115-residue chain is MTTSSYFLLMALGLLLYVCQSSFGNQHTRTFDTPKHRCGSEITNSYMDLCYRKRNDAGEKRGRASPLWQRRGSLSKLKARAKRNGAFHLPRDGRGVVEHCCHRPCSNAEFKKYCG.

The first 24 residues, 1-24, serve as a signal peptide directing secretion; it reads MTTSSYFLLMALGLLLYVCQSSFG. Positions 25–29 are excised as a propeptide; sequence NQHTR. Pro-34 carries the post-translational modification 4-hydroxyproline; partial. Cystine bridges form between Cys-38–Cys-101, Cys-50–Cys-114, and Cys-100–Cys-105. At Glu-41 the chain carries 4-carboxyglutamate. Residues 53 to 94 constitute a propeptide, c peptide; that stretch reads KRNDAGEKRGRASPLWQRRGSLSKLKARAKRNGAFHLPRDGR. Position 98 is a 4-carboxyglutamate (Glu-98). Pro-104 is subject to 4-hydroxyproline; partial. 4-carboxyglutamate; partial is present on Glu-109. Cysteine amide is present on Cys-114.

Belongs to the insulin family. As to quaternary structure, heterodimer of A and B chains; disulfide-linked. Expressed by the venom gland.

Its subcellular location is the secreted. This venom insulin, from a fish-hunting cone snail, facilitates prey capture by rapidly inducing hypoglycemic shock. It is one of the smallest known insulin found in nature and lacks the C-terminal segment of the B chain that, in human insulin, mediates engagement of the insulin receptor (INSR) and assembly of the hormone's hexameric storage form. Despite lacking this segment, it both binds and activates human insulin receptor (long isoform (HIR-B)) with a high potency (EC(50)=16.28 nM). In vivo, intraperitoneal injection of this peptide into zebrafish lowers blood glucose with the same potency than human insulin. In addition, when applied to water, this peptide reduces overall locomotor activity of zebrafish larvae, observed as a significant decrease in the percentage of time spent swimming and movement frequency. When tested on a mouse model of diabetes, this insulin also lowers blood glucose with a 10-fold lower potency than human insulin. This Conus geographus (Geography cone) protein is Con-Ins G1a.